The primary structure comprises 354 residues: Type II restriction enzyme BanI (354 aa).

In terms of assembly, homodimer.

It carries out the reaction Endonucleolytic cleavage of DNA to give specific double-stranded fragments with terminal 5'-phosphates.. In terms of biological role, a P subtype restriction enzyme that recognizes the double-stranded sequence 5'-GGYRCC-3' and cleaves after G-1. This Aneurinibacillus aneurinilyticus (Bacillus aneurinolyticus) protein is Type II restriction enzyme BanI (banIR).